We begin with the raw amino-acid sequence, 402 residues long: Propionate kinase (402 aa).

The ATP site is built by N11 and K18. N11 contacts Mg(2+). Position 86 (R86) interacts with substrate. The Proton donor/acceptor role is filled by D143. Residues H175, 203 to 207 (HLGNG), 278 to 280 (DLR), and 326 to 330 (GIGEN) each bind ATP.

This sequence belongs to the acetokinase family. TdcD subfamily. As to quaternary structure, homodimer. It depends on Mg(2+) as a cofactor.

The enzyme catalyses propanoate + ATP = propanoyl phosphate + ADP. Its pathway is amino-acid degradation; L-threonine degradation via propanoate pathway; propanoate from L-threonine: step 4/4. Functionally, catalyzes the conversion of propionyl phosphate and ADP to propionate and ATP. The sequence is that of Propionate kinase from Escherichia coli O157:H7.